The chain runs to 251 residues: Flagellar brake protein YcgR (251 aa).

The 113-residue stretch at 127 to 239 (QRRDGFRVRP…ASRTLQRYID (113 aa)) folds into the PilZ domain.

This sequence belongs to the YcgR family. In terms of assembly, monomer. Interacts with the flagellar basal bodies.

The protein localises to the bacterial flagellum basal body. Its function is as follows. Acts as a flagellar brake, regulating swimming and swarming in a bis-(3'-5') cyclic diguanylic acid (c-di-GMP)-dependent manner. Binds 1 c-di-GMP dimer per subunit. Increasing levels of c-di-GMP lead to decreased motility. The protein is Flagellar brake protein YcgR of Leptothrix cholodnii (strain ATCC 51168 / LMG 8142 / SP-6) (Leptothrix discophora (strain SP-6)).